A 254-amino-acid chain; its full sequence is Countin-2 (254 aa).

Positions Met1–Ala19 are cleaved as a signal peptide. In terms of domain architecture, Saposin B-type spans Gln22–Gln107. 3 disulfide bridges follow: Cys26–Cys103, Cys29–Cys97, and Cys56–Cys68. N-linked (GlcNAc...) asparagine glycans are attached at residues Asn110 and Asn219. The tract at residues Gln231–Tyr254 is disordered. Residues Thr233–Ser245 are compositionally biased toward gly residues.

This sequence belongs to the countin family.

It is found in the secreted. Cell-counting factor that limits the minimum size of the multicellular structure. May up-regulate the expression of both gp24 and gp80, which mediate cell adhesion. This Dictyostelium discoideum (Social amoeba) protein is Countin-2 (ctnB).